A 304-amino-acid polypeptide reads, in one-letter code: Glutaminase (304 aa).

Ser63, Asn114, Glu158, Asn165, Tyr189, Tyr240, and Val258 together coordinate substrate.

It belongs to the glutaminase family. In terms of assembly, homotetramer.

The catalysed reaction is L-glutamine + H2O = L-glutamate + NH4(+). This Shewanella baltica (strain OS155 / ATCC BAA-1091) protein is Glutaminase.